Reading from the N-terminus, the 423-residue chain is Mannose-6-phosphate isomerase (423 aa).

An N-acetylalanine modification is found at Ala2. Residues Ser102 and Ser108 each carry the phosphoserine modification. 4 residues coordinate Zn(2+): Gln110, His112, Glu137, and His276. Arg295 is a catalytic residue.

This sequence belongs to the mannose-6-phosphate isomerase type 1 family. It depends on Zn(2+) as a cofactor. As to expression, expressed in all tissues, but more abundant in heart, brain and skeletal muscle.

It localises to the cytoplasm. It catalyses the reaction D-mannose 6-phosphate = D-fructose 6-phosphate. The protein operates within nucleotide-sugar biosynthesis; GDP-alpha-D-mannose biosynthesis; alpha-D-mannose 1-phosphate from D-fructose 6-phosphate: step 1/2. Functionally, isomerase that catalyzes the interconversion of fructose-6-P and mannose-6-P and has a critical role in the supply of D-mannose derivatives required for many eukaryotic glycosylation reactions. This is Mannose-6-phosphate isomerase from Homo sapiens (Human).